Consider the following 311-residue polypeptide: Ribosomal RNA small subunit methyltransferase H (311 aa).

S-adenosyl-L-methionine contacts are provided by residues 32–34 (GGH), D52, F78, D99, and Q106.

Belongs to the methyltransferase superfamily. RsmH family.

Its subcellular location is the cytoplasm. The enzyme catalyses cytidine(1402) in 16S rRNA + S-adenosyl-L-methionine = N(4)-methylcytidine(1402) in 16S rRNA + S-adenosyl-L-homocysteine + H(+). Specifically methylates the N4 position of cytidine in position 1402 (C1402) of 16S rRNA. This Halothermothrix orenii (strain H 168 / OCM 544 / DSM 9562) protein is Ribosomal RNA small subunit methyltransferase H.